We begin with the raw amino-acid sequence, 315 residues long: Lipoyl synthase (315 aa).

7 residues coordinate [4Fe-4S] cluster: Cys62, Cys67, Cys73, Cys88, Cys92, Cys95, and Ser302. Residues 73–291 (CFGHGTATFM…GELAKKLGFS (219 aa)) form the Radical SAM core domain.

The protein belongs to the radical SAM superfamily. Lipoyl synthase family. It depends on [4Fe-4S] cluster as a cofactor.

The protein resides in the cytoplasm. It carries out the reaction [[Fe-S] cluster scaffold protein carrying a second [4Fe-4S](2+) cluster] + N(6)-octanoyl-L-lysyl-[protein] + 2 oxidized [2Fe-2S]-[ferredoxin] + 2 S-adenosyl-L-methionine + 4 H(+) = [[Fe-S] cluster scaffold protein] + N(6)-[(R)-dihydrolipoyl]-L-lysyl-[protein] + 4 Fe(3+) + 2 hydrogen sulfide + 2 5'-deoxyadenosine + 2 L-methionine + 2 reduced [2Fe-2S]-[ferredoxin]. It functions in the pathway protein modification; protein lipoylation via endogenous pathway; protein N(6)-(lipoyl)lysine from octanoyl-[acyl-carrier-protein]: step 2/2. Catalyzes the radical-mediated insertion of two sulfur atoms into the C-6 and C-8 positions of the octanoyl moiety bound to the lipoyl domains of lipoate-dependent enzymes, thereby converting the octanoylated domains into lipoylated derivatives. This is Lipoyl synthase from Coxiella burnetii (strain Dugway 5J108-111).